The primary structure comprises 96 residues: DNA-directed RNA polymerase subunit Rpo11 (96 aa).

This sequence belongs to the archaeal Rpo11/eukaryotic RPB11/RPC19 RNA polymerase subunit family. As to quaternary structure, part of the RNA polymerase complex.

The protein resides in the cytoplasm. The enzyme catalyses RNA(n) + a ribonucleoside 5'-triphosphate = RNA(n+1) + diphosphate. Functionally, DNA-dependent RNA polymerase (RNAP) catalyzes the transcription of DNA into RNA using the four ribonucleoside triphosphates as substrates. The chain is DNA-directed RNA polymerase subunit Rpo11 from Methanococcus maripaludis (strain C5 / ATCC BAA-1333).